The chain runs to 522 residues: ARS-binding protein 1 (522 aa).

One can recognise an HTH CENPB-type domain in the interval 70 to 144; the sequence is DVKRNRPPKY…RKRHILHAIN (75 aa). Residue T460 is modified to Phosphothreonine.

In terms of assembly, interacts with mcm10.

Its subcellular location is the nucleus. In terms of biological role, binds, preferentially, to the Maundrell ARS consensus sequence within ARS3002. This chain is ARS-binding protein 1 (abp1), found in Schizosaccharomyces pombe (strain 972 / ATCC 24843) (Fission yeast).